A 440-amino-acid chain; its full sequence is tRNA(Ile)-lysidine synthase (440 aa).

Serine 31–serine 36 serves as a coordination point for ATP.

It belongs to the tRNA(Ile)-lysidine synthase family.

The protein localises to the cytoplasm. The catalysed reaction is cytidine(34) in tRNA(Ile2) + L-lysine + ATP = lysidine(34) in tRNA(Ile2) + AMP + diphosphate + H(+). Ligates lysine onto the cytidine present at position 34 of the AUA codon-specific tRNA(Ile) that contains the anticodon CAU, in an ATP-dependent manner. Cytidine is converted to lysidine, thus changing the amino acid specificity of the tRNA from methionine to isoleucine. This chain is tRNA(Ile)-lysidine synthase, found in Borrelia garinii subsp. bavariensis (strain ATCC BAA-2496 / DSM 23469 / PBi) (Borreliella bavariensis).